The chain runs to 159 residues: UPF0201 protein MK0399 (159 aa).

It belongs to the UPF0201 family.

The chain is UPF0201 protein MK0399 from Methanopyrus kandleri (strain AV19 / DSM 6324 / JCM 9639 / NBRC 100938).